A 335-amino-acid chain; its full sequence is Ubiquinol oxidase 1b, mitochondrial (335 aa).

Residues 1–47 (MSSRMAGATLLRHLGPRLFAAEPVYSGLAASARGVMPAAARIFPARM) constitute a mitochondrion transit peptide. The chain crosses the membrane as a helical span at residues 160 to 180 (ALLLETVAGVPGMVGGMLLHL). Residues glutamate 164, glutamate 203, and histidine 206 each coordinate Fe cation. The helical transmembrane segment at 222 to 242 (ALVLAAQGVFFNAYFVGYLVS) threads the bilayer. Glutamate 254, glutamate 305, and histidine 308 together coordinate Fe cation.

It belongs to the alternative oxidase family. Requires Fe cation as cofactor.

It is found in the mitochondrion inner membrane. It catalyses the reaction 2 a ubiquinol + O2 = 2 a ubiquinone + 2 H2O. Catalyzes the cyanide-resistant oxidation of ubiquinol and the reduction of molecular oxygen to water, but does not translocate protons and consequently is not linked to oxidative phosphorylation. May increase respiration when the cytochrome respiratory pathway is restricted, or in response to low temperatures. The chain is Ubiquinol oxidase 1b, mitochondrial from Oryza sativa subsp. japonica (Rice).